The primary structure comprises 327 residues: Aspartate--ammonia ligase (327 aa).

This sequence belongs to the class-II aminoacyl-tRNA synthetase family. AsnA subfamily.

It is found in the cytoplasm. The catalysed reaction is L-aspartate + NH4(+) + ATP = L-asparagine + AMP + diphosphate + H(+). The protein operates within amino-acid biosynthesis; L-asparagine biosynthesis; L-asparagine from L-aspartate (ammonia route): step 1/1. This is Aspartate--ammonia ligase from Bacillus cereus (strain AH187).